Reading from the N-terminus, the 144-residue chain is Protein cornichon (144 aa).

At 1–10 (MAFNFTAFTY) the chain is on the lumenal side. An interaction with grk region spans residues 1–57 (MAFNFTAFTYIVALIGDAFLIFFAIFHVIAFDELKTDYKNPIDQCNSLNPLVLPEYL). A helical transmembrane segment spans residues 11-31 (IVALIGDAFLIFFAIFHVIAF). Residues 32-56 (DELKTDYKNPIDQCNSLNPLVLPEY) lie on the Cytoplasmic side of the membrane. A helical transmembrane segment spans residues 57-77 (LLHIFLNLLFLFCGEWFSLCI). Residues 78 to 122 (NIPLIAYHIWRYKNRPVMSGPGLYDPTTVLKTDTLYRNMREGWIK) lie on the Lumenal side of the membrane. The helical transmembrane segment at 123 to 143 (LAVYLISFFYYIYGMVYSLIS) threads the bilayer. A topological domain (cytoplasmic) is located at residue T144.

Belongs to the cornichon family. In terms of assembly, interacts with grk. In terms of tissue distribution, expressed in male and female somatic tissues.

The protein localises to the endoplasmic reticulum membrane. Acts as a cargo receptor necessary for the transportation of gurken (grk) to a transitional endoplasmic reticulum (tER) site and promotes its incorporation into coat protein complex II (COPII) vesicles. Associated with gurken, produces a signal received by torpedo resulting in a signaling pathway that first establishes posterior follicle cell fates and normal localization of the anterior and posterior determinants, later they act in a signaling event inducing dorsal follicle cell fates and regulating the dorsal-ventral pattern of egg and embryo. This Drosophila melanogaster (Fruit fly) protein is Protein cornichon (cni).